Consider the following 478-residue polypeptide: SPbeta prophage-derived uncharacterized protein YonD (478 aa).

A coiled-coil region spans residues 326 to 419 (IQSQLNQKDE…KFSTEEVQNL (94 aa)).

The protein is SPbeta prophage-derived uncharacterized protein YonD (yonD) of Bacillus subtilis (strain 168).